The primary structure comprises 145 residues: Putative pre-16S rRNA nuclease (145 aa).

It belongs to the YqgF nuclease family.

Its subcellular location is the cytoplasm. Its function is as follows. Could be a nuclease involved in processing of the 5'-end of pre-16S rRNA. In Opitutus terrae (strain DSM 11246 / JCM 15787 / PB90-1), this protein is Putative pre-16S rRNA nuclease.